Here is an 85-residue protein sequence, read N- to C-terminus: uncharacterized protein (85 aa).

Residues 64 to 76 (DPPVRRSGGREQH) are compositionally biased toward basic and acidic residues. Residues 64 to 85 (DPPVRRSGGREQHLAQVWRATS) form a disordered region.

This is an uncharacterized protein from Mycobacterium bovis (strain ATCC BAA-935 / AF2122/97).